A 201-amino-acid polypeptide reads, in one-letter code: ATP-dependent Clp protease proteolytic subunit (201 aa).

Serine 98 functions as the Nucleophile in the catalytic mechanism. Residue histidine 123 is part of the active site.

The protein belongs to the peptidase S14 family. As to quaternary structure, fourteen ClpP subunits assemble into 2 heptameric rings which stack back to back to give a disk-like structure with a central cavity, resembling the structure of eukaryotic proteasomes.

The protein resides in the cytoplasm. It catalyses the reaction Hydrolysis of proteins to small peptides in the presence of ATP and magnesium. alpha-casein is the usual test substrate. In the absence of ATP, only oligopeptides shorter than five residues are hydrolyzed (such as succinyl-Leu-Tyr-|-NHMec, and Leu-Tyr-Leu-|-Tyr-Trp, in which cleavage of the -Tyr-|-Leu- and -Tyr-|-Trp bonds also occurs).. Functionally, cleaves peptides in various proteins in a process that requires ATP hydrolysis. Has a chymotrypsin-like activity. Plays a major role in the degradation of misfolded proteins. This chain is ATP-dependent Clp protease proteolytic subunit, found in Rickettsia peacockii (strain Rustic).